The primary structure comprises 327 residues: Germination protease (327 aa).

A propeptide spanning residues 1–7 (MNSVRTD) is cleaved from the precursor.

Belongs to the peptidase A25 family. As to quaternary structure, homotetramer. Autoproteolytically processed. The inactive tetrameric zymogen termed p46 autoprocesses to a smaller form termed p41, which is active only during spore germination.

It catalyses the reaction Endopeptidase action with P4 Glu or Asp, P1 preferably Glu &gt; Asp, P1' hydrophobic and P2' Ala.. Functionally, initiates the rapid degradation of small, acid-soluble proteins during spore germination. This is Germination protease from Clostridium acetobutylicum (strain ATCC 824 / DSM 792 / JCM 1419 / IAM 19013 / LMG 5710 / NBRC 13948 / NRRL B-527 / VKM B-1787 / 2291 / W).